The sequence spans 793 residues: 3',5'-cyclic-nucleotide phosphodiesterase regA (793 aa).

The tract at residues 1-153 (MNNKQEEIDQ…SSHRVSDFSD (153 aa)) is disordered. 3 stretches are compositionally biased toward low complexity: residues 13–34 (SSTSTSPSPSSSSSPSNNDSTS), 54–69 (NKNNNNNNNNNNSNNN), and 80–121 (NNSS…NNNN). Positions 161-280 (RILVADDDDV…LLKKKIDTVL (120 aa)) constitute a Response regulatory domain. D212 carries the 4-aspartylphosphate modification. In terms of domain architecture, PDEase spans 410 to 733 (RRNSIPTFPQ…ENWQAYMELQ (324 aa)). H487 acts as the Proton donor in catalysis. Residues H491, H527, D528, and D639 each contribute to the a divalent metal cation site. Positions 756–793 (KLPKIDEEENRDKVSSSSSSSTAPLTSTSSSNNETSSS) are disordered. Over residues 770 to 793 (SSSSSSSTAPLTSTSSSNNETSSS) the composition is skewed to low complexity.

This sequence belongs to the cyclic nucleotide phosphodiesterase family. The cofactor is a divalent metal cation. In terms of processing, the phosphorelay mechanism involves the sequential transfer of a phosphate group from Asp-212 of pde2 to 'His-65' of rdeA. Phosphorylation of Asp-212 activates the phosphodiesterase domain.

The protein localises to the cytoplasm. The protein resides in the cytosol. It catalyses the reaction 3',5'-cyclic AMP + H2O = AMP + H(+). Its activity is regulated as follows. Inhibited by 3-isobutyl-1-methylxanthine (IBMX). In terms of biological role, phosphodiesterase specific for cAMP. Involved in the degradation of intracellular cAMP. Morphological suppressor of tagB. Phosphorelay protein that accepts phosphate from rdeA or supplies phosphate from regA; depending on the relative concentration of the phosphodonor proteins. This is 3',5'-cyclic-nucleotide phosphodiesterase regA (regA) from Dictyostelium discoideum (Social amoeba).